The sequence spans 278 residues: Pyrroline-5-carboxylate reductase (278 aa).

This sequence belongs to the pyrroline-5-carboxylate reductase family.

The protein localises to the cytoplasm. The catalysed reaction is L-proline + NADP(+) = (S)-1-pyrroline-5-carboxylate + NADPH + 2 H(+). The enzyme catalyses L-proline + NAD(+) = (S)-1-pyrroline-5-carboxylate + NADH + 2 H(+). The protein operates within amino-acid biosynthesis; L-proline biosynthesis; L-proline from L-glutamate 5-semialdehyde: step 1/1. The chain is Pyrroline-5-carboxylate reductase from Actinidia chinensis var. chinensis (Chinese soft-hair kiwi).